The sequence spans 311 residues: Olfactory receptor 6C3 (311 aa).

Residues methionine 1–isoleucine 22 lie on the Extracellular side of the membrane. Asparagine 2 carries N-linked (GlcNAc...) asparagine glycosylation. Residues valine 23–isoleucine 43 form a helical membrane-spanning segment. The Cytoplasmic portion of the chain corresponds to threonine 44–histidine 51. Residues leucine 52 to threonine 72 form a helical membrane-spanning segment. Residues valine 73–alanine 96 lie on the Extracellular side of the membrane. Residues cysteine 94 and cysteine 186 are joined by a disulfide bond. Residues glutamine 97–tyrosine 117 form a helical membrane-spanning segment. Residues aspartate 118–lysine 136 lie on the Cytoplasmic side of the membrane. Residues leucine 137–leucine 157 traverse the membrane as a helical segment. Topologically, residues methionine 158–valine 194 are extracellular. A helical transmembrane segment spans residues isoleucine 195–serine 214. At tyrosine 215 to alanine 234 the chain is on the cytoplasmic side. Residues phenylalanine 235 to methionine 255 traverse the membrane as a helical segment. Residues tyrosine 256 to threonine 268 lie on the Extracellular side of the membrane. Residues lysine 269–leucine 289 traverse the membrane as a helical segment. Residues arginine 290–glutamine 311 lie on the Cytoplasmic side of the membrane.

It belongs to the G-protein coupled receptor 1 family.

The protein resides in the cell membrane. Odorant receptor. The chain is Olfactory receptor 6C3 (OR6C3) from Homo sapiens (Human).